The primary structure comprises 348 residues: Fructose-1,6-bisphosphatase class 1 (348 aa).

Mg(2+)-binding residues include glutamate 107, aspartate 129, isoleucine 131, and aspartate 132. Substrate is bound by residues 132–135, asparagine 224, tyrosine 252, and lysine 282; that span reads DGSS. Position 288 (glutamate 288) interacts with Mg(2+).

This sequence belongs to the FBPase class 1 family. As to quaternary structure, homotetramer. The cofactor is Mg(2+).

It localises to the cytoplasm. It catalyses the reaction beta-D-fructose 1,6-bisphosphate + H2O = beta-D-fructose 6-phosphate + phosphate. It participates in carbohydrate biosynthesis; Calvin cycle. This is Fructose-1,6-bisphosphatase class 1 from Microcystis aeruginosa (strain NIES-843 / IAM M-2473).